A 463-amino-acid chain; its full sequence is Minor capsid protein L2 (463 aa).

The short motif at Met-1–Ala-12 is the Nuclear localization signal element. Cysteines 21 and 27 form a disulfide. The Nuclear localization signal signature appears at His-444 to Phe-452.

It belongs to the papillomaviridae L2 protein family. Interacts with major capsid protein L1. Interacts with E2; this interaction inhibits E2 transcriptional activity but not the DNA replication function E2. Interacts with host GADD45GIP1. Interacts with host HSPA8; this interaction is required for L2 nuclear translocation. Interacts with host importins KPNB2 and KPNB3. Forms a complex with importin alpha2-beta1 heterodimers via interaction with the importin alpha2 adapter. Interacts with host DYNLT1; this interaction is essential for virus intracellular transport during entry. Interacts (via C-terminus) with host retromer subunits VPS35 and VPS29. Highly phosphorylated.

It localises to the virion. Its subcellular location is the host nucleus. The protein resides in the host early endosome. The protein localises to the host Golgi apparatus. In terms of biological role, minor protein of the capsid that localizes along the inner surface of the virion, within the central cavities beneath the L1 pentamers. Plays a role in capsid stabilization through interaction with the major capsid protein L1. Once the virion enters the host cell, L2 escorts the genomic DNA into the nucleus by promoting escape from the endosomal compartments and traffic through the host Golgi network. Mechanistically, the C-terminus of L2 possesses a cell-penetrating peptide that protudes from the host endosome, interacts with host cytoplasmic retromer cargo and thereby mediates the capsid delivery to the host trans-Golgi network. Plays a role through its interaction with host dynein in the intracellular microtubule-dependent transport of viral capsid toward the nucleus. Mediates the viral genome import into the nucleus through binding to host importins. Once within the nucleus, L2 localizes viral genomes to host PML bodies in order to activate early gene expression for establishment of infection. Later on, promotes late gene expression by interacting with the viral E2 protein and by inhibiting its transcriptional activation functions. During virion assembly, encapsidates the genome by direct interaction with the viral DNA. This is Minor capsid protein L2 from Homo sapiens (Human).